Here is a 1239-residue protein sequence, read N- to C-terminus: Structural polyprotein (1239 aa).

Residues 1-35 (MFPYPTLNYPPMAPINPMAYRDPNPPRQVAPFRPP) are necessary for nucleocapsid assembly and virus assembly. The interval 1–101 (MFPYPTLNYP…RKPKPGKRQR (101 aa)) is disordered. Pro residues predominate over residues 23-34 (PNPPRQVAPFRP). The host transcription inhibition stretch occupies residues 36 to 69 (LAAQIEDLRRSIANLTLKQRAPNPPAGPPAKRKK). Residues 43-50 (LRRSIANL) carry the Supraphysiological nuclear export signal motif. A glycan (N-linked (GlcNAc...) asparagine; by host) is linked at N49. A Nuclear localization signal motif is present at residues 66-69 (KRKK). The segment covering 79 to 101 (KKKRPPPPAKKQKRKPKPGKRQR) has biased composition (basic residues). Residues 81–111 (KRPPPPAKKQKRKPKPGKRQRMCMKLESDKT) are binding to the viral RNA. The tract at residues 96 to 110 (PGKRQRMCMKLESDK) is ribosome-binding. The residue at position 108 (S108) is a Phosphoserine. Positions 110-259 (KTFPIMLNGQ…KDTPEGSEPW (150 aa)) constitute a Peptidase S3 domain. T111 carries the phosphothreonine modification. The Charge relay system role is filled by H136. Residues 152–157 (KKASIY) are interaction with spike glycoprotein E2. Active-site charge relay system residues include D158 and S210. Residues 244-248 (QKGVT) are interaction with spike glycoprotein E2. The functions as an uncleaved signal peptide for the precursor of protein E3/E2 stretch occupies residues 260-271 (SLATVMCVLANI). Residues 260–681 (SLATVMCVLA…HVVVVYYYNR (422 aa)) are Extracellular-facing. 9 cysteine pairs are disulfide-bonded: C266–C275, C280–C284, C283–C315, C341–C444, C344–C349, C411–C425, C472–C585, C521–C545, and C523–C539. A glycan (N-linked (GlcNAc...) asparagine; by host) is linked at N270. A glycan (N-linked (GlcNAc...) asparagine; by host) is linked at N637. Residues 682 to 702 (YPLTTIIGLCTCVAIIMVSCD) form a helical membrane-spanning segment. Over 703-742 (HPCGSFSGLRNLCITPYKLAPNAQVPILLALLCCIKPTRA) the chain is Cytoplasmic. C705 is lipidated: S-palmitoyl cysteine; by host. Residues 710–714 (GLRNL) are interaction with the capsid protein. Residues 714 to 734 (LCITPYKLAPNAQVPILLALL) are transient transmembrane before p62-6K protein processing. Residues C715, C735, and C736 are each lipidated (S-palmitoyl cysteine; by host). C715 and C736 are oxidised to a cystine. Over 743–754 (DDTLQVLNYLWN) the chain is Extracellular. Residues 755–775 (NNQNFFWMQTLIPLAALIVCM) traverse the membrane as a helical segment. R776 is a topological domain (cytoplasmic). Residues 777 to 797 (MLAALFCCGPAFLLVCGAWAA) traverse the membrane as a helical segment. Residues 798–1215 (AYEHTAVMPN…WSWLKVLVGG (418 aa)) lie on the Extracellular side of the membrane. 4 disulfides stabilise this stretch: C847-C912, C860-C892, C861-C894, and C866-C876. The segment at 882 to 899 (VYPFMWGGAYCFCDTENT) is E1 fusion peptide loop. N-linked (GlcNAc...) asparagine; by host glycosylation is found at N932 and N1069. Cystine bridges form between C1058/C1070, C1100/C1175, and C1105/C1179. The chain crosses the membrane as a helical span at residues 1216–1236 (TSAFIVLGLIATAVVALVLFF). The Cytoplasmic segment spans residues 1237-1239 (HRH).

In terms of assembly, homodimer. Homomultimer. Interacts with host karyopherin KPNA4; this interaction allows the nuclear import of the viral capsid protein. Interacts with spike glycoprotein E2. Interacts with host IRAK1; the interaction leads to inhibition of IRAK1-dependent signaling. Part of a tetrameric complex composed of host CRM1, host importin alpha/beta dimer and the viral capsid; this complex blocks the receptor-mediated transport through the nuclear pore. Interacts with host phosphatase PPP1CA; this interaction dephosphorylates the capsid protein, which increases its ability to bind to the viral genome. The precursor of protein E3/E2 and E1 form a heterodimer shortly after synthesis. As to quaternary structure, the precursor of protein E3/E2 and E1 form a heterodimer shortly after synthesis. Processing of the precursor of protein E3/E2 into E2 and E3 results in a heterodimer of the spike glycoproteins E2 and E1. Spike at virion surface are constituted of three E2-E1 heterodimers. After target cell attachment and endocytosis, E1 change conformation to form homotrimers. E2-E1 heterodimers interact with host VLDLR or LRP8/APOER2 to mediate viral entry. Interacts with 6K protein. In terms of assembly, interacts with spike glycoprotein E1. Processing of the precursor of protein E3/E2 into E2 and E3 results in a heterodimer of the spike glycoproteins E2 and E1. Spike at virion surface are constituted of a trimer of E2-E1 heterodimers. Interacts with 6K protein. E2-E1 heterodimers interact with host VLDLR or LRP8/APOER2 to mediate viral entry. Interacts (via E2-A) with host VLDLR (via class A repeats); this interaction mediates viral entry into host cell. Interacts with host LRP8/APOER2 (via class A repeats); this interaction mediates viral entry into host cell. Oligomer. Interacts with spike glycoprotein E1. Interacts with spike glycoprotein E2. In terms of processing, structural polyprotein: Specific enzymatic cleavages in vivo yield mature proteins. Capsid protein is auto-cleaved during polyprotein translation, unmasking a signal peptide at the N-terminus of the precursor of E3/E2. The remaining polyprotein is then targeted to the host endoplasmic reticulum, where host signal peptidase cleaves it into pE2, 6K and E1 proteins. pE2 is further processed to mature E3 and E2 by host furin in trans-Golgi vesicle. Post-translationally, phosphorylated on serine and threonine residues. Palmitoylated via thioester bonds. These palmitoylations may induce disruption of the C-terminus transmembrane. This would result in the reorientation of E2 C-terminus from lumenal to cytoplasmic side. In terms of processing, N-glycosylated. Post-translationally, palmitoylated via thioester bonds.

The protein localises to the virion. It is found in the host cytoplasm. Its subcellular location is the host cell membrane. The protein resides in the host nucleus. It localises to the virion membrane. The protein localises to the host Golgi apparatus. It is found in the host trans-Golgi network. Its subcellular location is the host endoplasmic reticulum. It catalyses the reaction Autocatalytic release of the core protein from the N-terminus of the togavirus structural polyprotein by hydrolysis of a -Trp-|-Ser- bond.. Its function is as follows. Forms an icosahedral capsid with a T=4 symmetry composed of 240 copies of the capsid protein surrounded by a lipid membrane through which penetrate 80 spikes composed of trimers of E1-E2 heterodimers. The capsid protein binds to the viral RNA genome at a site adjacent to a ribosome binding site for viral genome translation following genome release. Possesses a protease activity that results in its autocatalytic cleavage from the nascent structural protein. Following its self-cleavage, the capsid protein transiently associates with ribosomes, and within several minutes the protein binds to viral RNA and rapidly assembles into icosahedric core particles. The resulting nucleocapsid eventually associates with the cytoplasmic domain of the spike glycoprotein E2 at the cell membrane, leading to budding and formation of mature virions. In case of infection, new virions attach to target cells and after clathrin-mediated endocytosis their membrane fuses with the host endosomal membrane. This leads to the release of the nucleocapsid into the cytoplasm, followed by an uncoating event necessary for the genomic RNA to become accessible. The uncoating might be triggered by the interaction of capsid proteins with ribosomes. Binding of ribosomes would release the genomic RNA since the same region is genomic RNA-binding and ribosome-binding. Specifically inhibits interleukin-1 receptor-associated kinase 1/IRAK1-dependent signaling during viral entry, representing a means by which the alphaviruses may evade innate immune detection and activation prior to viral gene expression. Inhibits host transcription. Forms a tetrameric complex with XPO1/CRM1 and the nuclear import receptor importin. This complex blocks the central channel of host nuclear pores thereby inhibiting the receptor-mediated nuclear transport and thus the host mRNA and rRNA transcription. The inhibition of transcription is linked to a cytopathic effect on the host cell. In terms of biological role, provides the signal sequence for the translocation of the precursor of protein E3/E2 to the host endoplasmic reticulum. Furin-cleaved E3 remains associated with spike glycoprotein E1 and mediates pH protection of the latter during the transport via the secretory pathway. After virion release from the host cell, the assembly protein E3 is gradually released in the extracellular space. Plays a role in viral attachment to target host cell, by binding to the cell receptors VLDLR or LRP8/APOER2. Synthesized as a p62 precursor which is processed by furin at the cell membrane just before virion budding, giving rise to E2-E1 heterodimer. The p62-E1 heterodimer is stable, whereas E2-E1 is unstable and dissociate at low pH. p62 is processed at the last step, presumably to avoid E1 fusion activation before its final export to cell surface. E2 C-terminus contains a transitory transmembrane that would be disrupted by palmitoylation, resulting in reorientation of the C-terminal tail from lumenal to cytoplasmic side. This step is critical since E2 C-terminus is involved in budding by interacting with capsid proteins. This release of E2 C-terminus in cytoplasm occurs lately in protein export, and precludes premature assembly of particles at the endoplasmic reticulum membrane. Functionally, acts as a viroporin that participates in virus glycoprotein processing and transport to the plasma membrane, cell permeabilization and budding of viral particles. Disrupts the calcium homeostasis of the cell, probably at the endoplasmic reticulum level. This leads to cytoplasmic calcium elevation. Because of its lipophilic properties, the 6K protein is postulated to influence the selection of lipids that interact with the transmembrane domains of the glycoproteins, which, in turn, affects the deformability of the bilayer required for the extreme curvature that occurs as budding proceeds. Present in low amount in virions, about 3% compared to viral glycoproteins. Its function is as follows. Class II viral fusion protein. Fusion activity is inactive as long as E1 is bound to E2 in mature virion. After virus attachment to target cell via host VLDLR or LRP8/APOER2 and endocytosis, acidification of the endosome induces dissociation of E1/E2 heterodimer and concomitant trimerization of the E1 subunits. This E1 trimer is fusion active, and promotes release of viral nucleocapsid in cytoplasm after endosome and viral membrane fusion. Efficient fusion requires the presence of cholesterol and sphingolipid in the target membrane. This Aedes (Human) protein is Structural polyprotein.